Reading from the N-terminus, the 328-residue chain is Tetraacyldisaccharide 4'-kinase (328 aa).

55–62 (TAGGNGKT) is an ATP binding site.

This sequence belongs to the LpxK family.

It catalyses the reaction a lipid A disaccharide + ATP = a lipid IVA + ADP + H(+). It functions in the pathway glycolipid biosynthesis; lipid IV(A) biosynthesis; lipid IV(A) from (3R)-3-hydroxytetradecanoyl-[acyl-carrier-protein] and UDP-N-acetyl-alpha-D-glucosamine: step 6/6. Its function is as follows. Transfers the gamma-phosphate of ATP to the 4'-position of a tetraacyldisaccharide 1-phosphate intermediate (termed DS-1-P) to form tetraacyldisaccharide 1,4'-bis-phosphate (lipid IVA). The protein is Tetraacyldisaccharide 4'-kinase of Shigella boydii serotype 18 (strain CDC 3083-94 / BS512).